The sequence spans 100 residues: MQKPCKENEGKPKCSVPKREEKRPYGEFERQQTEGNFRQRLLQSLEEFKEDIDYRHFKDEEMTREGDEMERCLEEIRGLRKKFRALHSNHRHSRDRPYPI.

Over residues 1–32 (MQKPCKENEGKPKCSVPKREEKRPYGEFERQQ) the composition is skewed to basic and acidic residues. The interval 1-34 (MQKPCKENEGKPKCSVPKREEKRPYGEFERQQTE) is disordered. A coiled-coil region spans residues 60–88 (EEMTREGDEMERCLEEIRGLRKKFRALHS).

Belongs to the TFS-II family. TFA subfamily. In terms of tissue distribution, highly expressed in normal and fetal brain tissues, and weakly expressed in uterus and ovary. Down-regulated in epithelial ovarian, cervical, prostate, breast, brain and lung cancer cell lines and in brain and ovarian tumors.

The protein resides in the nucleus. Plays a role in the negative regulation of NF-kappa-B signaling at the basal level by modulating transcriptional activity of NF-kappa-B on its target gene promoters. Associates with cyclin D1 promoter containing Myc E-box sequence and transcriptionally represses cyclin D1 expression. Regulates telomerase reverse transcriptase expression and telomerase activity in both ALT (alternative lengthening of telomeres)and telomerase-positive cell lines. The chain is Transcription elongation factor A protein-like 7 (TCEAL7) from Homo sapiens (Human).